We begin with the raw amino-acid sequence, 976 residues long: MPRPGFAHATAPALAHARARISPVARRRVVVMRTRVDGAAKSLVTQLRLALGSTASRASSIASARRRVRALGTATNDQSTGTRANPNAEGKDNSGRGIRRRFLEFYEARGHSRQPSASLVPEDPTVLLTIAGMLQFKPVFMGQREREMPRATTTQKCVRTNDIENVGVTARHHTFFEMLGNFSFGDYFKREACEWAWELATNEFGLNPERVWVSVFREDDEAFAIWRDVVGVPESRIKRMDEKDNFWAAGPTGPCGPCSELYYDFHPERGLDGADLDDDSRFIEFYNLVFMELNRDADGGIKPLKNKNIDTGMGLERMAQILQGVSNNYETDLIRPIIDKAASMAGLDYASCSATQKQQLKVIGDHTRAVTYMISDGVFASNIGRGYIVRRLLRRVVRNGRLLGIKPADGQSAFTPSIAEVAISMSEECDPQVVKNTARILAELEREELSFQKTLGRGEEMLAELIEKAKDSKSGLSGKDAFTLYDTYGFPLDITTDVASEAGIAVDLEGFEKAMAEQRSMSQAAHQTVDVTAGNALAQVADELGAMSEFIGYDNISSDVSNVLAIVSGGESVEEASGGARVDVVLDVTPFYAESGGQVGDNGFLHSADGAVLKVTDVQKAGGGRIIVHSATVVKGSIKKGSQVSANVDENARRRARNNHTATHLLQSALKKVLGDDVSQAGSLCGFDRLRFDFNCPKAVTEAQLLEVETLVNGWISQSADLTAEEMPIAAAKEKGATMMFGEKYGDVVRVVDVPGISMELCGGTHVSNTAEIGGFKIISEAGIASGIRRIEAVAGAGVVELLQQRDAVVKQLASTLRVPPEEIASRVSGMQKDLVAAQKLAESLRGELAVAKANALVSEARAVGESKVLVARLDGVDPGALKVAAENLATQLGDGAAVILGSANGDNVGLVALFDTKVQKDGDLKAGQVLGAAAKRCGGGGGGKPGFAQAGGRDATQLDAALDEALQTLTTALDK.

Residues Met-1–Thr-54 constitute a chloroplast and mitochondrion transit peptide. The disordered stretch occupies residues Leu-71–Gly-95. Residues Thr-73 to Asn-85 are compositionally biased toward polar residues.

The protein belongs to the class-II aminoacyl-tRNA synthetase family. Monomer. Zn(2+) is required as a cofactor.

Its subcellular location is the plastid. The protein resides in the chloroplast. It is found in the mitochondrion. The enzyme catalyses tRNA(Ala) + L-alanine + ATP = L-alanyl-tRNA(Ala) + AMP + diphosphate. In terms of biological role, catalyzes the attachment of alanine to tRNA(Ala) in a two-step reaction: alanine is first activated by ATP to form Ala-AMP and then transferred to the acceptor end of tRNA(Ala). Also edits incorrectly charged tRNA(Ala) via its editing domain. In Ostreococcus tauri, this protein is Probable alanine--tRNA ligase, chloroplastic/mitochondrial.